Here is a 245-residue protein sequence, read N- to C-terminus: Nodulation protein G (245 aa).

An NAD(+)-binding site is contributed by 11–35 (VTGASGGIGEAIARVLHAQGAIVGL). Serine 139 contacts substrate. Residue tyrosine 152 is the Proton acceptor of the active site.

The protein belongs to the short-chain dehydrogenases/reductases (SDR) family.

Its function is as follows. Proposed to modify Nod factor fatty acyl chain. The protein is Nodulation protein G (nodG) of Rhizobium sp. (strain N33).